Consider the following 60-residue polypeptide: Large ribosomal subunit protein uL30 (60 aa).

It belongs to the universal ribosomal protein uL30 family. As to quaternary structure, part of the 50S ribosomal subunit.

The polypeptide is Large ribosomal subunit protein uL30 (Thermus thermophilus (strain ATCC BAA-163 / DSM 7039 / HB27)).